The sequence spans 97 residues: Protein RnfH (97 aa).

It belongs to the UPF0125 (RnfH) family.

This chain is Protein RnfH, found in Aliivibrio salmonicida (strain LFI1238) (Vibrio salmonicida (strain LFI1238)).